A 707-amino-acid chain; its full sequence is Bone morphogenetic protein 1 (707 aa).

The tract at residues 57 to 90 (SGAATNISRPEKGRRTRKERRRSREKRASTSRPE) is disordered. Residue N62 is glycosylated (N-linked (GlcNAc...) asparagine). Residues 68-81 (KGRRTRKERRRSRE) are compositionally biased toward basic residues. Residues 84–283 (ASTSRPERVW…AQARKLYKCP (200 aa)) form the Peptidase M12A domain. N-linked (GlcNAc...) asparagine glycosylation occurs at N105. 4 disulfides stabilise this stretch: C126/C282, C146/C168, C148/C149, and C285/C311. Position 176 (H176) interacts with Zn(2+). E177 is an active-site residue. Zn(2+) contacts are provided by H180 and H186. CUB domains lie at 285–397 (CGET…YEAL) and 398–509 (CGGE…NYFK). N295 and N326 each carry an N-linked (GlcNAc...) asparagine glycan. 8 disulfide bridges follow: C338–C360, C398–C424, C451–C473, C514–C526, C522–C535, C537–C550, C554–C580, and C607–C629. Positions 510–551 (EVDECSRPNNGGCEQRCVNTLGSYKCACDPGYELGQDKKSCE) constitute an EGF-like; calcium-binding domain. A CUB 3 domain is found at 554-666 (CGGFLTKLNG…KGFQANFFSE (113 aa)). A glycan (N-linked (GlcNAc...) asparagine) is linked at N562. The tract at residues 682–707 (RGQQNQAPKRVRPRMRLRTVKKTRPP) is disordered. Residues 690–707 (KRVRPRMRLRTVKKTRPP) are compositionally biased toward basic residues.

In terms of assembly, interacts with olfml3/ont1. Zn(2+) serves as cofactor. Post-translationally, proteolytically activated in the trans-Golgi network by furin-like/paired basic proprotein convertases, cleavage is not required for secretion.

The protein localises to the golgi apparatus. It localises to the trans-Golgi network. Its subcellular location is the secreted. The protein resides in the extracellular space. It is found in the extracellular matrix. Its function is as follows. Metalloprotease involved in pattern formation in gastrula and later differentiation of developing organs. Able to cleave chordin (chrd), suggesting that it may act in dorsoventral patterning during early development by regulating the chordin (chrd) activity. This chain is Bone morphogenetic protein 1 (bmp1), found in Xenopus laevis (African clawed frog).